Consider the following 199-residue polypeptide: Probable nicotinate-nucleotide adenylyltransferase (199 aa).

This sequence belongs to the NadD family.

The enzyme catalyses nicotinate beta-D-ribonucleotide + ATP + H(+) = deamido-NAD(+) + diphosphate. It participates in cofactor biosynthesis; NAD(+) biosynthesis; deamido-NAD(+) from nicotinate D-ribonucleotide: step 1/1. Its function is as follows. Catalyzes the reversible adenylation of nicotinate mononucleotide (NaMN) to nicotinic acid adenine dinucleotide (NaAD). The sequence is that of Probable nicotinate-nucleotide adenylyltransferase from Roseiflexus sp. (strain RS-1).